The sequence spans 90 residues: Probable Fe(2+)-trafficking protein (90 aa).

Belongs to the Fe(2+)-trafficking protein family.

Functionally, could be a mediator in iron transactions between iron acquisition and iron-requiring processes, such as synthesis and/or repair of Fe-S clusters in biosynthetic enzymes. The polypeptide is Probable Fe(2+)-trafficking protein (Vibrio atlanticus (strain LGP32) (Vibrio splendidus (strain Mel32))).